A 1499-amino-acid chain; its full sequence is Rho GTPase-activating protein 35 (1499 aa).

Residues 1-266 (MMMARKQDVR…IPYFEALKQQ (266 aa)) are has GTPase activity, required for proper localization. GTP-binding positions include Lys-28, 33–37 (IGKSC), Leu-52, Ser-56, 95–97 (EQT), 201–203 (KCD), and 229–231 (SAR). FF domains are found at residues 270–327 (IATA…HIHR), 368–422 (KLLE…HLEK), 429–483 (RAEM…HQKQ), and 485–550 (IDRA…HIHF). Position 308 is a phosphotyrosine (Tyr-308). Phosphoserine is present on Ser-589. Residues 592-767 (DLNIDRINLV…LLDSKRNLNL (176 aa)) form the pG1 pseudoGTPase domain. Phosphoserine occurs at positions 770 and 773. The pG2 pseudoGTPase domain maps to 783 to 947 (RIVMCLMCGD…FKDVVEKKNI (165 aa)). Residues Ser-970, Ser-975, Ser-985, and Ser-1072 each carry the phosphoserine modification. Tyr-1087 bears the Phosphotyrosine mark. Tyr-1105 is modified (phosphotyrosine; by ABL2 and PTK6). Over residues 1124–1141 (KAQSNGSGNGSDSEMDTS) the composition is skewed to polar residues. Positions 1124–1148 (KAQSNGSGNGSDSEMDTSSLERGRK) are disordered. 6 positions are modified to phosphoserine: Ser-1134, Ser-1142, Ser-1150, Ser-1176, Ser-1179, and Ser-1221. The tract at residues 1177 to 1207 (VGSDDELGPIRKKEEDQASQGYKGDNAVIPY) is disordered. Residues 1213 to 1236 (PRRRNILRSLRRNTKKPKPKPRPS) form a required for phospholipid binding and regulation of the substrate preference region. Phosphothreonine is present on Thr-1226. Ser-1236 bears the Phosphoserine mark. The Rho-GAP domain maps to 1249–1436 (VPLTTVVTPE…LFIQQCPFFF (188 aa)). The segment at 1446–1499 (GAAPGSPSAMAPTVPFLTSTPATSQPSPPQSPPPTPQSPMQPLLSSQLQAEHTL) is disordered. Over residues 1448-1470 (APGSPSAMAPTVPFLTSTPATSQ) the composition is skewed to low complexity. Residues 1471–1484 (PSPPQSPPPTPQSP) show a composition bias toward pro residues. Phosphoserine occurs at positions 1472 and 1476. Thr-1480 is modified (phosphothreonine). Ser-1483 carries the phosphoserine modification. The span at 1485–1499 (MQPLLSSQLQAEHTL) shows a compositional bias: low complexity.

As to quaternary structure, interacts with the general transcription factor GTF2I, the interaction sequesters GTF2I in the cytoplasm. Interacts with RASA1. Phosphorylation of Tyr-1105 by PTK6 promotes the association with RASA1, inactivating RHOA while activating RAS. Phosphorylation at Tyr-308 by PDGFRA inhibits binding to GTF2I. Phosphorylated by PRKCA at Ser-1221 and Thr-1226, induces relocalization from the cytoplasm to regions of plasma membrane ruffling and prevents the binding and substrate specificity regulation by phospholipids. In brain, phosphorylated by FYN and SRC. During focal adhesion formation, phosphorylated by MAPK1 and MAPK3 at the C-terminal region, probably at Ser-1451, Ser-1476, Thr-1480 and Ser-1483. Phosphorylation by MAPK1 and MAPK3 inhibits GAP function and localizes ARGHAP35 away from newly forming focal adhesions and stress fibers in cells spreading on fibronectin. Phosphorylation at Ser-1476 and Thr-1480 by GSK3B requires priming by MAPK and inhibits RhoGAP activity and modulates polarized cell migration. In terms of tissue distribution, expressed in the developing kidneys. Expressed in all regions of the mature nervous system (at protein level). Detected in neutrophils (at protein level).

The protein localises to the cytoplasm. It is found in the cytoskeleton. It localises to the cilium basal body. The protein resides in the nucleus. Its subcellular location is the cell membrane. Its function is as follows. Rho GTPase-activating protein (GAP). Binds several acidic phospholipids which inhibits the Rho GAP activity to promote the Rac GAP activity. This binding is inhibited by phosphorylation by PRKCA. Involved in cell differentiation as well as cell adhesion and migration, plays an important role in retinal tissue morphogenesis, neural tube fusion, midline fusion of the cerebral hemispheres and mammary gland branching morphogenesis. Transduces signals from p21-ras to the nucleus, acting via the ras GTPase-activating protein (GAP). Transduces SRC-dependent signals from cell-surface adhesion molecules, such as laminin, to promote neurite outgrowth. Regulates axon outgrowth, guidance and fasciculation. Modulates Rho GTPase-dependent F-actin polymerization, organization and assembly, is involved in polarized cell migration and in the positive regulation of ciliogenesis and cilia elongation. During mammary gland development, is required in both the epithelial and stromal compartments for ductal outgrowth. Represses transcription of the glucocorticoid receptor by binding to the cis-acting regulatory sequence 5'-GAGAAAAGAAACTGGAGAAACTC-3'; this function is however unclear and would need additional experimental evidences. The sequence is that of Rho GTPase-activating protein 35 from Mus musculus (Mouse).